An 813-amino-acid chain; its full sequence is Leucine--tRNA ligase (813 aa).

The 'HIGH' region motif lies at 41-51; sequence PYPSGTLHMGH. The 'KMSKS' region motif lies at 575–579; sequence KMSKS. Lys578 contacts ATP.

Belongs to the class-I aminoacyl-tRNA synthetase family.

The protein localises to the cytoplasm. The catalysed reaction is tRNA(Leu) + L-leucine + ATP = L-leucyl-tRNA(Leu) + AMP + diphosphate. In Francisella tularensis subsp. holarctica (strain FTNF002-00 / FTA), this protein is Leucine--tRNA ligase.